The following is a 400-amino-acid chain: S-adenosylmethionine decarboxylase proenzyme (400 aa).

Active-site residues include Glu-18 and Glu-21. Ser-78 (schiff-base intermediate with substrate; via pyruvic acid) is an active-site residue. A Pyruvic acid (Ser); by autocatalysis modification is found at Ser-78. Cys-92 serves as the catalytic Proton donor; for catalytic activity. Catalysis depends on proton acceptor; for processing activity residues Ser-243 and His-256.

It belongs to the eukaryotic AdoMetDC family. Requires pyruvate as cofactor. Post-translationally, is synthesized initially as an inactive proenzyme. Formation of the active enzyme involves a self-maturation process in which the active site pyruvoyl group is generated from an internal serine residue via an autocatalytic post-translational modification. Two non-identical subunits are generated from the proenzyme in this reaction, and the pyruvate is formed at the N-terminus of the alpha chain, which is derived from the carboxyl end of the proenzyme. The post-translation cleavage follows an unusual pathway, termed non-hydrolytic serinolysis, in which the side chain hydroxyl group of the serine supplies its oxygen atom to form the C-terminus of the beta chain, while the remainder of the serine residue undergoes an oxidative deamination to produce ammonia and the pyruvoyl group blocking the N-terminus of the alpha chain.

It carries out the reaction S-adenosyl-L-methionine + H(+) = S-adenosyl 3-(methylsulfanyl)propylamine + CO2. It participates in amine and polyamine biosynthesis; S-adenosylmethioninamine biosynthesis; S-adenosylmethioninamine from S-adenosyl-L-methionine: step 1/1. This Zea mays (Maize) protein is S-adenosylmethionine decarboxylase proenzyme (SAMDC).